The chain runs to 452 residues: Glutathione gamma-glutamylcysteinyltransferase 2 (452 aa).

The 220-residue stretch at 1 to 220 folds into the Peptidase C83 domain; it reads MSMASLYRRS…GFMLISRPHR (220 aa). Positions 287–315 form a coiled coil; it reads EDVNQNLSSEEKSRLKLKQELLKQVQETK.

This sequence belongs to the phytochelatin synthase family. In terms of tissue distribution, expressed in shoots, roots, leaves, stems and flowers.

It catalyses the reaction [Glu(-Cys)](n)-Gly + glutathione + H(+) = [Glu(-Cys)](n+1)-Gly + glycine. Requires cadmium for activity. Also activated in heterologous system by AsO(4)(3-) ions, but not by Cu(2+), Zn(2+), Mn(2+) or Ni(2+) ions. Involved in the synthesis of phytochelatins (PC) and homophytochelatins (hPC), the heavy-metal-binding peptides of plants. In Arabidopsis thaliana (Mouse-ear cress), this protein is Glutathione gamma-glutamylcysteinyltransferase 2 (PCS2).